The sequence spans 130 residues: Small ribosomal subunit protein uS9 (130 aa).

Belongs to the universal ribosomal protein uS9 family.

The protein is Small ribosomal subunit protein uS9 of Pseudomonas fluorescens (strain SBW25).